A 415-amino-acid polypeptide reads, in one-letter code: rRNA methyltransferase 3, mitochondrial (415 aa).

The N-terminal 47 residues, 1-47 (MAALCRGTVRACILKPLGLSVSLQVKRNVRALRRTPVRVLPAAEKGR), are a transit peptide targeting the mitochondrion. The tract at residues 41–73 (PAAEKGRERKEVEARRPQQPRQSEYQTRTSQGV) is disordered. Residues 44–56 (EKGRERKEVEARR) show a composition bias toward basic and acidic residues. A compositionally biased stretch (polar residues) spans 59-73 (QPRQSEYQTRTSQGV). The S-adenosyl-L-methionine site is built by G357, I381, and L390.

Belongs to the class IV-like SAM-binding methyltransferase superfamily. RNA methyltransferase TrmH family.

It is found in the mitochondrion. The enzyme catalyses a uridine in rRNA + S-adenosyl-L-methionine = a 2'-O-methyluridine in rRNA + S-adenosyl-L-homocysteine + H(+). Its function is as follows. S-adenosyl-L-methionine-dependent 2'-O-ribose methyltransferase that catalyzes the formation of 2'-O-methylguanosine at position 1370 (Gm1370) in the mitochondrial large subunit ribosomal RNA (mtLSU rRNA), a conserved modification in the peptidyl transferase domain of the mtLSU rRNA. Also required for formation of 2'-O-methyluridine at position 1369 (Um1369) mediated by MRM2. The sequence is that of rRNA methyltransferase 3, mitochondrial from Xenopus tropicalis (Western clawed frog).